Reading from the N-terminus, the 358-residue chain is Phospho-N-acetylmuramoyl-pentapeptide-transferase (358 aa).

10 consecutive transmembrane segments (helical) span residues 13–47, 81–101, 106–126, 148–168, 171–191, 201–221, 228–248, 255–275, 278–298, and 336–356; these read LFIL…SIFI, MGGI…TINL, LILL…DDYL, ISII…LITI, SWAI…LVGI, LDGL…TEIL, LFVF…FLKY, IFMG…IALL, SIFT…SVII, and IVEN…VLKI.

Belongs to the glycosyltransferase 4 family. MraY subfamily. The cofactor is Mg(2+).

The protein resides in the cell inner membrane. It catalyses the reaction UDP-N-acetyl-alpha-D-muramoyl-L-alanyl-gamma-D-glutamyl-meso-2,6-diaminopimeloyl-D-alanyl-D-alanine + di-trans,octa-cis-undecaprenyl phosphate = di-trans,octa-cis-undecaprenyl diphospho-N-acetyl-alpha-D-muramoyl-L-alanyl-D-glutamyl-meso-2,6-diaminopimeloyl-D-alanyl-D-alanine + UMP. The protein operates within cell wall biogenesis; peptidoglycan biosynthesis. Its function is as follows. Catalyzes the initial step of the lipid cycle reactions in the biosynthesis of the cell wall peptidoglycan: transfers peptidoglycan precursor phospho-MurNAc-pentapeptide from UDP-MurNAc-pentapeptide onto the lipid carrier undecaprenyl phosphate, yielding undecaprenyl-pyrophosphoryl-MurNAc-pentapeptide, known as lipid I. This Prochlorococcus marinus (strain MIT 9301) protein is Phospho-N-acetylmuramoyl-pentapeptide-transferase.